Here is a 219-residue protein sequence, read N- to C-terminus: Thymidylate kinase (219 aa).

9 to 16 (GIEGSGKT) is a binding site for ATP.

The protein belongs to the thymidylate kinase family.

The catalysed reaction is dTMP + ATP = dTDP + ADP. Phosphorylation of dTMP to form dTDP in both de novo and salvage pathways of dTTP synthesis. This is Thymidylate kinase from Pelobacter propionicus (strain DSM 2379 / NBRC 103807 / OttBd1).